The chain runs to 199 residues: 5'-deoxynucleotidase HDDC2 (199 aa).

Alanine 2 carries the post-translational modification N-acetylalanine. At serine 5 the chain carries Phosphoserine. Residues 41–143 (VSDHMYRMAV…VKQLDQCEMI (103 aa)) form the HD domain. Residues histidine 44, histidine 72, aspartate 73, glutamate 76, aspartate 81, isoleucine 82, and aspartate 138 each coordinate a divalent metal cation. At serine 199 the chain carries Phosphoserine.

Belongs to the HDDC2 family. Homodimer. It depends on Mn(2+) as a cofactor. The cofactor is Co(2+). Mg(2+) serves as cofactor.

It catalyses the reaction a 2'-deoxyribonucleoside 5'-phosphate + H2O = a 2'-deoxyribonucleoside + phosphate. Catalyzes the dephosphorylation of the nucleoside 5'-monophosphates deoxyadenosine monophosphate (dAMP), deoxycytidine monophosphate (dCMP), deoxyguanosine monophosphate (dGMP) and deoxythymidine monophosphate (dTMP). The polypeptide is 5'-deoxynucleotidase HDDC2 (Hddc2) (Mus musculus (Mouse)).